Reading from the N-terminus, the 902-residue chain is MADPEVCCFITKILCAHGGRMALDALLQEIALSEPQLCEVLQVAGPDRFVVLETGGEAGITRSVVATTRARVCRRKYCQRPCDNLHLCKLNLLGRCNYSQSERNLCKYSHEVLSEENFKVLKNHELSGLNKEELAVLLLQSDPFFMPEICKSYKGEGRQQICNQQPPCSRLHICDHFTRGNCRFPNCLRSHNLMDRKVLAIMREHGLNPDVVQNIQDICNSKHMQKNPPGPRAPSSHRRNMAYRARSKSRDRFFQGSQEFLASASASAERSCTPSPDQISHRASLEDAPVDDLTRKFTYLGSQDRARPPSGSSKATDLGGTSQAGTSQRFLENGSQEDLLHGNPGSTYLASNSTSAPNWKSLTSWTNDQGARRKTVFSPTLPAARSSLGSLQTPEAVTTRKGTGLLSSDYRIINGKSGTQDIQPGPLFNNNADGVATDITSTRSLNYKSTSSGHREISSPRIQDAGPASRDVQATGRIADDADPRVALVNDSLSDVTSTTSSRVDDHDSEEICLDHLCKGCPLNGSCSKVHFHLPYRWQMLIGKTWTDFEHMETIEKGYCNPGIHLCSVGSYTINFRVMSCDSFPIRRLSTPSSVTKPANSVFTTKWIWYWKNESGTWIQYGEEKDKRKNSNVDSSYLESLYQSCPRGVVPFQAGSRNYELSFQGMIQTNIASKTQKDVIRRPTFVPQWYVQQMKRGPDHQPAKTSSVSLTATFRPQEDFCFLSSKKYKLSEIHHLHPEYVRVSEHFKASMKNFKIEKIKKIENSELLDKFTWKKSQMKEEGKLLFYATSRAYVESICSNNFDSFLHETHENKYGKGIYFAKDAIYSHKNCPYDAKNVVMFVAQVLVGKFTEGNITYTSPPPQFDSCVDTRSNPSVFVIFQKDQVYPQYVIEYTEDKACVIS.

A2 is subject to N-acetylalanine. The N-terminal domain stretch occupies residues 2-254 (ADPEVCCFIT…ARSKSRDRFF (253 aa)). The Nuclear localization signal motif lies at 69–76 (RARVCRRK). 4 C3H1-type zinc fingers span residues 73–86 (CRRKYCQRPCDNLH), 88–110 (CKLNLLGRCNYSQSERNLCKYSH), 150–172 (CKSYKGEGRQQICNQQPPCSRLH), and 169–193 (SRLHICDHFTRGNCRFPNCLRSHNL). The interval 221 to 251 (SKHMQKNPPGPRAPSSHRRNMAYRARSKSRD) is disordered. A binding to EXOSC5 region spans residues 224–254 (MQKNPPGPRAPSSHRRNMAYRARSKSRDRFF). The span at 235–247 (SSHRRNMAYRARS) shows a compositional bias: basic residues. Residues S257, S263, S267, and S271 each carry the phosphoserine; by GSK3-beta modification. The span at 265 to 278 (SASAERSCTPSPDQ) shows a compositional bias: polar residues. Disordered regions lie at residues 265–287 (SASAERSCTPSPDQISHRASLED) and 299–373 (YLGS…GARR). T273 is modified (phosphothreonine). S275 and S284 each carry phosphoserine. The short motif at 285-292 (LEDAPVDD) is the Nuclear export signal element. 6 positions are modified to phosphoserine: S302, S327, S335, S355, S378, and S387. Polar residues-rich tracts occupy residues 310–336 (SGSSKATDLGGTSQAGTSQRFLENGSQ) and 344–369 (PGSTYLASNSTSAPNWKSLTSWTNDQ). T393 carries the phosphothreonine modification. Residues S407, S469, S492, and S494 each carry the phosphoserine modification. Residues 445–481 (LNYKSTSSGHREISSPRIQDAGPASRDVQATGRIADD) are disordered. Position 554 is a phosphothreonine (T554). A phosphoserine mark is found at Y572 and S590. In terms of domain architecture, WWE spans 594-681 (SVTKPANSVF…ASKTQKDVIR (88 aa)). The 187-residue stretch at 716-902 (PQEDFCFLSS…YTEDKACVIS (187 aa)) folds into the PARP catalytic domain.

Belongs to the ARTD/PARP family. Homodimer or homooligomer. Homooligomerization is essential for its antiviral activity. Interacts with EXOSC5. Interacts (via N-terminal domain) with DDX17 in an RNA-independent manner. Interacts with EXOSC3, EXOSC7, DCP2 and DCP1A. Interacts with PARN in an RNA-independent manner. Interacts with XRN1 in an RNA-dependent manner. Isoform 2 interacts (via zinc-fingers) with RIGI in an RNA-dependent manner. Interacts (via N-terminal domain) with DHX30 (via N-terminus) in an RNA-independent manner. In terms of processing, phosphorylation at Ser-275 is essential for sequential phosphorylation of Ser-271, Ser-267, Ser-263 and Ser-257 by GSK3-beta. Phosphorylation by GSK3-beta enhances its antiviral activity.

The protein resides in the cytoplasm. It is found in the nucleus. Its function is as follows. Antiviral protein which inhibits the replication of viruses by recruiting the cellular RNA degradation machineries to degrade the viral mRNAs. Binds to a ZAP-responsive element (ZRE) present in the target viral mRNA, recruits cellular poly(A)-specific ribonuclease PARN to remove the poly(A) tail, and the 3'-5' exoribonuclease complex exosome to degrade the RNA body from the 3'-end. It also recruits the decapping complex DCP1-DCP2 through RNA helicase p72 (DDX17) to remove the cap structure of the viral mRNA to initiate its degradation from the 5'-end. Its target viruses belong to families which include retroviridae: human immunodeficiency virus type 1 (HIV-1), moloney and murine leukemia virus (MoMLV) and xenotropic MuLV-related virus (XMRV), filoviridae: ebola virus (EBOV) and marburg virus (MARV), togaviridae: sindbis virus (SINV) and Ross river virus (RRV). Specifically targets the multiply spliced but not unspliced or singly spliced HIV-1 mRNAs for degradation. Isoform 1 is a more potent viral inhibitor than isoform 2. Isoform 2 acts as a positive regulator of RIGI signaling resulting in activation of the downstream effector IRF3 leading to the expression of type I IFNs and IFN stimulated genes (ISGs). This chain is Zinc finger CCCH-type antiviral protein 1, found in Homo sapiens (Human).